A 147-amino-acid chain; its full sequence is Large ribosomal subunit protein uL13 (147 aa).

Residues 126-147 (AGPTHPHQAQQPVPYEIKQVAQ) form a disordered region.

This sequence belongs to the universal ribosomal protein uL13 family. As to quaternary structure, part of the 50S ribosomal subunit.

Its function is as follows. This protein is one of the early assembly proteins of the 50S ribosomal subunit, although it is not seen to bind rRNA by itself. It is important during the early stages of 50S assembly. This is Large ribosomal subunit protein uL13 from Parafrankia sp. (strain EAN1pec).